Here is a 420-residue protein sequence, read N- to C-terminus: Histidine--tRNA ligase (420 aa).

The protein belongs to the class-II aminoacyl-tRNA synthetase family. As to quaternary structure, homodimer.

It localises to the cytoplasm. It carries out the reaction tRNA(His) + L-histidine + ATP = L-histidyl-tRNA(His) + AMP + diphosphate + H(+). This is Histidine--tRNA ligase (hisS) from Thermotoga maritima (strain ATCC 43589 / DSM 3109 / JCM 10099 / NBRC 100826 / MSB8).